A 596-amino-acid polypeptide reads, in one-letter code: Merlin (596 aa).

Serine 13 carries the post-translational modification Phosphoserine. The region spanning 22–311 is the FERM domain; that stretch reads FTVRIVTMDA…GNHDLFMRRR (290 aa). Serine 518 is subject to Phosphoserine; by PAK. The tract at residues 560–580 is disordered; sequence VLHSESSDRGGPSSKHNTIKK.

Interacts with NHERF1, HGS and AGAP2. Interacts with SGSM3. Interacts (via FERM domain) with MPP1. Interacts with LAYN. Interacts with WWC1. Interacts with the CUL4A-RBX1-DDB1-VprBP/DCAF1 E3 ubiquitin-protein ligase complex. The unphosphorylated form interacts (via FERM domain) with VPRBP/DCAF1. Interacts (via FERM domain) with NOP53; the interaction is direct. Interacts with SCHIP1; the interaction is direct. In terms of processing, phosphorylation of Ser-518 inhibits nuclear localization by disrupting the intramolecular association of the FERM domain with the C-terminal tail. The dephosphorylation of Ser-518 favors the interaction with NOP53. Ubiquitinated by the CUL4A-RBX1-DDB1-DCAF1/VprBP E3 ubiquitin-protein ligase complex for ubiquitination and subsequent proteasome-dependent degradation.

The protein localises to the cell membrane. It is found in the cell projection. The protein resides in the cytoplasm. Its subcellular location is the cytoskeleton. It localises to the nucleus. Its function is as follows. Probable regulator of the Hippo/SWH (Sav/Wts/Hpo) signaling pathway, a signaling pathway that plays a pivotal role in tumor suppression by restricting proliferation and promoting apoptosis. Along with WWC1 can synergistically induce the phosphorylation of LATS1 and LATS2 and can probably function in the regulation of the Hippo/SWH (Sav/Wts/Hpo) signaling pathway. May act as a membrane stabilizing protein. May inhibit PI3 kinase by binding to AGAP2 and impairing its stimulating activity. Suppresses cell proliferation and tumorigenesis by inhibiting the CUL4A-RBX1-DDB1-VprBP/DCAF1 E3 ubiquitin-protein ligase complex. Plays a role in lens development and is required for complete fiber cell terminal differentiation, maintenance of cell polarity and separation of the lens vesicle from the corneal epithelium. The protein is Merlin (Nf2) of Mus musculus (Mouse).